We begin with the raw amino-acid sequence, 323 residues long: Phosphatidylethanolamine:ceramide ethanolaminephosphotransferase (323 aa).

Residues 1–26 lie on the Cytoplasmic side of the membrane; the sequence is MAVPPVEMYSGSFWNRMRKPLPLRTQ. Residues 27–47 form a helical membrane-spanning segment; that stretch reads VIRFTVVFVIVSFILVVALQI. The Extracellular portion of the chain corresponds to 48 to 74; sequence THERMPDPKVTKPLPDLGFELLTKVPG. The chain crosses the membrane as a helical span at residues 75–95; that stretch reads MYVLADCCIGFLNILSVFTAF. The Cytoplasmic segment spans residues 96-147; it reads KLYLLHRHCVGSGEPELPCNIPGVSRFFLSVWLCKENCRIELRNIHTIAWIR. A helical membrane pass occupies residues 148 to 168; it reads FITSYALLLLSRSIIMVVTSL. Topologically, residues 169 to 187 are extracellular; sequence PNPDDLCQNPPKIENRVKD. The helical transmembrane segment at 188–208 threads the bilayer; sequence ILLTVLTAGAGSIHCGDLMYS. The Cytoplasmic portion of the chain corresponds to 209–233; sequence GHTVILTLHLMFHWIYGAMVHWSFR. Residues 234–254 traverse the membrane as a helical segment; the sequence is PVVTVVAIFGYYCIVASRFHY. The Extracellular portion of the chain corresponds to 255–257; sequence TDD. A helical membrane pass occupies residues 258–278; sequence VLVAIYLTIATFIAVGHNADG. Residues 279 to 323 are Cytoplasmic-facing; the sequence is APWQLQLFIRWWPCCGANSREVAEDGVPVAIVIKNEEMMNFEGKS.

The protein belongs to the sphingomyelin synthase family.

Its subcellular location is the membrane. The catalysed reaction is an N-acylsphing-4-enine + a 1,2-diacyl-sn-glycero-3-phosphoethanolamine = an N-acylsphing-4-enine 1-phosphoethanolamine + a 1,2-diacyl-sn-glycerol. It catalyses the reaction an N-acylsphinganine + a 1,2-diacyl-sn-glycero-3-phosphoethanolamine = an N-acylsphinganine-1-phosphoethanolamine + a 1,2-diacyl-sn-glycerol. Functionally, predominantly synthesizes ethanolamine-phosphorylceramide (EPC), with minimal sphingomyelin (SM)/inositol phosphorylceramide (IPC) synthase activity. Specificity is likely to be defined by residues in the lumenal catalytic domain that interact with the polar head groups of the phospholipid donors. EPC is synthesized by both stages of the parasite life cycle, bloodstream forms (BSF) and procyclic forms (PCF), by transferring the phosphoethanolamine from a 1,2-diacyl-sn-glycero-3-phosphoethanolamine to an N-acylsphing-4-enine (ceramide) or an N-acylsphinganine (dihydroceramide). Similarly, SM is synthesized by transferring the phosphocholine from a 1,2-diacyl-sn-glycero-3-phosphocholine to ceramide or dihydroceramide by BSF and PCF, while IPC is confined to PCF. The ceramide/dihydroceramide ratios are skewed towards dihydroceramide in PCF parasites and ceramide in BSF parasites, this is likely due to differential expression and/or regulation of dihydroceramide desaturase, the enzyme responsible for converting dihydroceramide to ceramide. The chain is Phosphatidylethanolamine:ceramide ethanolaminephosphotransferase from Trypanosoma brucei brucei.